Consider the following 197-residue polypeptide: 3-isopropylmalate dehydratase small subunit (197 aa).

It belongs to the LeuD family. LeuD type 1 subfamily. In terms of assembly, heterodimer of LeuC and LeuD.

It catalyses the reaction (2R,3S)-3-isopropylmalate = (2S)-2-isopropylmalate. It participates in amino-acid biosynthesis; L-leucine biosynthesis; L-leucine from 3-methyl-2-oxobutanoate: step 2/4. Functionally, catalyzes the isomerization between 2-isopropylmalate and 3-isopropylmalate, via the formation of 2-isopropylmaleate. The chain is 3-isopropylmalate dehydratase small subunit from Mycobacterium sp. (strain KMS).